Here is a 1040-residue protein sequence, read N- to C-terminus: Nucleotide-binding oligomerization domain-containing protein 2 (1040 aa).

CARD domains are found at residues 26-122 and 126-218; these read CEMC…LHGC and HSLH…EAAT. The ATG16L1-binding motif signature appears at 63-77; sequence WEVLSWEDYEGFHLL. Residues Thr-239, Tyr-252, Thr-253, Gly-302, Ser-303, Gly-304, Lys-305, Ser-306, and Thr-307 each coordinate ADP. Residues 241 to 274 form a required for CARD9 binding region; it reads DGAETLCLEDIYTENVLEVWADVGMAGPPQKSPA. An NACHT domain is found at 293-618; it reads DTVLVVGEAG…FFAAFYLALS (326 aa). Residue 299-306 coordinates ATP; sequence GEAGSGKS. Cys-395 carries S-palmitoyl cysteine lipidation. His-603 serves as a coordination point for ADP. LRR repeat units lie at residues 791–812, 816–839, 844–865, 872–884, 900–920, 928–949, 956–976, 984–1005, and 1012–1032; these read RPVA…QLLP, VCKA…IECA, QLQK…SMAK, NFLA…NYIT, SLQF…QALA, SLRW…ALAL, MLEE…CSLA, SLKI…ALLQ, and TILE…DKLG. Cys-1033 carries the S-palmitoyl cysteine lipid modification.

The protein belongs to the NOD1-NOD2 family. As to quaternary structure, homooligomer: homooligomerizes following muramyl dipeptide (MDP)-binding, promoting RIPK2 recruitment. Interacts (via CARD domain) with RIPK2 (via CARD domain). Following RIPK2 recruitment, RIPK2 homooligomerizes via its CARD domain and forms long filaments named RIPosomes. Interacts (via CARD domain) with ubiquitin; inhibiting interaction with RIPK2. Component of a signaling complex consisting of ARHGEF2, NOD2 and RIPK2. Interacts with ANKRD17 (via N-terminus). Interacts with HSPA1A; the interaction enhances NOD2 stability. Interacts (via both CARD domains) with HSP90; the interaction enhances NOD2 stability. Interacts (via CARD domain) with SOCS3; the interaction promotes NOD2 degradation. Interacts (via CARD domain) with ERBIN; the interaction inhibits activation of NOD2. Interacts with MAPKBP1; the interaction is enhanced in the presence of muramyl dipeptide (MDP) and inhibits NOD2 homooligomerization and activation. Interacts with INAVA; the interaction takes place upon Pattern recognition receptor (PRR) stimulation. Interacts (via NACHT domain) with CARD9. Interacts (via CARD domain) with CASP1; this interaction leads to IL1B processing. Also interacts with CASP4. Interacts with NLRP1; this interaction is enhanced in the presence of muramyl dipeptide (MDP) and leads to increased IL1B release. Interacts with NLRP12; this interaction promotes degradation of NOD2 through the ubiquitin-proteasome pathway. Interacts with ANKHD1, C10orf67, CHMP5, DOCK7, ENTR1, KRT15, LDOC1, PPP1R12C, PPP2R3B, TRIM41 and VIM. Interacts with MAVS; interaction takes place following single-stranded RNA (ssRNA)-binding. Interacts with ATG16L1. Interacts with IRGM; promoting IRGM 'Lys-63'-linked polyubiquitination, which is required for interactions with the core autophagy factors. Post-translationally, palmitoylated by ZDHHC5; palmitoylation is required for proper recruitment to the bacterial entry site and hence for proper signaling upon cognate peptidoglycan detection. Palmitoylation promotes localization to the cell membrane. Palmitoylation protects from SQSTM1/p62-dependent autophagic degradation. Polyubiquitinated by TRIM27, leading to proteasome-mediated degradation. Polyubiquitinated and degraded following muramyl dipeptide (MDP) stimulation, conferring MDP tolerance and preventing septic shock. In terms of processing, degraded via selective autophagy following interaction with IRGM. IRGM promotes NOD2-RIPK2 RIPosome recruitment to autophagosome membranes, promoting their SQSTM1/p62-dependent autophagic degradation. Post-translationally, O-glycosylated by OGT, O-GlcNAcylation increases protein stability. Expressed in monocytes, macrophages, dendritic cells, hepatocytes, preadipocytes, epithelial cells of oral cavity, lung and intestine, with higher expression in ileal Paneth cells and in intestinal stem cells. As to expression, expressed at higher level in leukocytes.

Its subcellular location is the cell membrane. It localises to the basolateral cell membrane. The protein localises to the cytoplasm. It is found in the mitochondrion. ADP-binding promotes an inactive closed conformation. Its function is as follows. Pattern recognition receptor (PRR) that detects bacterial peptidoglycan fragments and other danger signals and plays an important role in gastrointestinal immunity. Specifically activated by muramyl dipeptide (MDP), a fragment of bacterial peptidoglycan found in every bacterial peptidoglycan type. NOD2 specifically recognizes and binds 6-O-phospho-MDP, the phosphorylated form of MDP, which is generated by NAGK. 6-O-phospho-MDP-binding triggers oligomerization that facilitates the binding and subsequent activation of the proximal adapter receptor-interacting RIPK2. Following recruitment, RIPK2 undergoes 'Met-1'- (linear) and 'Lys-63'-linked polyubiquitination by E3 ubiquitin-protein ligases XIAP, BIRC2, BIRC3 and the LUBAC complex, becoming a scaffolding protein for downstream effectors, triggering activation of the NF-kappa-B and MAP kinases signaling. This in turn leads to the transcriptional activation of hundreds of genes involved in immune response. Its ability to detect bacterial MDP plays a central role in maintaining the equilibrium between intestinal microbiota and host immune responses to control inflammation. An imbalance in this relationship results in dysbiosis, whereby pathogenic bacteria prevail on commensals, causing damage in the intestinal epithelial barrier as well as allowing bacterial invasion and inflammation. Acts as a regulator of appetite by sensing MDP in a subset of brain neurons: microbiota-derived MDP reach the brain, where they bind and activate NOD2 in inhibitory hypothalamic neurons, decreasing neuronal activity, thereby regulating satiety and body temperature. NOD2-dependent MDP-sensing of bacterial cell walls in the intestinal epithelial compartment contributes to sustained postnatal growth upon undernutrition. Also plays a role in antiviral response by acting as a sensor of single-stranded RNA (ssRNA) from viruses: upon ssRNA-binding, interacts with MAVS, leading to activation of interferon regulatory factor-3/IRF3 and expression of type I interferon. Also acts as a regulator of autophagy in dendritic cells via its interaction with ATG16L1, possibly by recruiting ATG16L1 at the site of bacterial entry. NOD2 activation in the small intestine crypt also contributes to intestinal stem cells survival and function: acts by promoting mitophagy via its association with ATG16L1. In addition to its main role in innate immunity, also regulates the adaptive immune system by acting as regulator of helper T-cell and regulatory T-cells (Tregs). Besides recognizing pathogens, also involved in the endoplasmic reticulum stress response: acts by sensing and binding to the cytosolic metabolite sphingosine-1-phosphate generated in response to endoplasmic reticulum stress, initiating an inflammation process that leads to activation of the NF-kappa-B and MAP kinases signaling. May also be involved in NLRP1 activation following activation by MDP, leading to CASP1 activation and IL1B release in macrophages. Functionally, acts as a pattern recognition receptor (PRR); able to activate NF-kappa-B. In terms of biological role, can activate NF-kappa-B in a muramyl dipeptide (MDP)-independent manner. The protein is Nucleotide-binding oligomerization domain-containing protein 2 of Homo sapiens (Human).